Reading from the N-terminus, the 184-residue chain is Gremlin-1 (184 aa).

A signal peptide spans 1-24 (MSRTAYTVGALLLLLGTLLPAAEG). Positions 24–77 (GKKKGSQGAIPPPDKAQHNDSEQTQSPQQPGSRNRGRGQGRGTAMPGEEVLESS) are disordered. N42 is a glycosylation site (N-linked (GlcNAc...) asparagine). Cystine bridges form between C94–C144, C108–C158, C118–C176, and C122–C178. One can recognise a CTCK domain in the interval 94-184 (CKTQPLKQTI…QCRCISIDLD (91 aa)).

It belongs to the DAN family. In terms of assembly, homodimer; can also form homooligomers. Interacts with BMP2; can form higher oligomers with BMP2. Interacts with SLIT1 and SLIT2 in a glycosylation-dependent manner. As to expression, highly expressed in small intestine, fetal brain and colon. Expression is restricted to intestinal subepithelial myofibroblasts (ISEMFs) at the crypt base. In subjects with HMPS1, by contrast, GREM1 is expressed, not only in basal ISEMFs, but also at very high levels in epithelial cells (predominantly colonocytes), with expression extending most of the way up the sides of the crypt. Weakly expressed in brain, ovary, prostate, pancreas and skeletal muscle. In brain found in the region localized around the internal capsule in the large subcortical nuclei, including caudate, putamen, substantia nigra, thalamus and subthalamus. Predominantly expressed in normal cells including neurons, astrocytes and fibroblasts.

It localises to the secreted. Cytokine that may play an important role during carcinogenesis and metanephric kidney organogenesis, as a BMP antagonist required for early limb outgrowth and patterning in maintaining the FGF4-SHH feedback loop. Down-regulates the BMP4 signaling in a dose-dependent manner. Antagonist of BMP2; inhibits BMP2-mediated differentiation of osteoblasts (in vitro). Acts as inhibitor of monocyte chemotaxis. Can inhibit the growth or viability of normal cells but not transformed cells when is overexpressed. This is Gremlin-1 (GREM1) from Homo sapiens (Human).